A 199-amino-acid polypeptide reads, in one-letter code: Phosphatidylethanolamine N-methyltransferase (199 aa).

The Lumenal segment spans residues 1-12; it reads MTRLLGYVDPLD. The segment at residues 13–33 is an intramembrane region (helical); that stretch reads PSFVAAVITITFNPLYWNVVA. Over 34–45 the chain is Lumenal; that stretch reads RWEHKTRKLSRA. The helical transmembrane segment at 46-66 threads the bilayer; sequence FGSPYLACYSLSVTILLLNFL. Residues 67–93 are Cytoplasmic-facing; it reads RSHCFTQAMLSQPRMESLDTPAAYSLG. Residues 94–114 traverse the membrane as a helical segment; the sequence is LALLGLGVVLVLSSFFALGFA. 98 to 100 lines the S-adenosyl-L-methionine pocket; sequence GLG. Residues 115–157 lie on the Lumenal side of the membrane; sequence GTFLGDYFGILKEARVTVFPFNILDNPMYWGSTANYLGWAIMH. Residues 158–178 form a helical membrane-spanning segment; that stretch reads ASPTGLLLTVLVALTYIVALL. The Cytoplasmic segment spans residues 179 to 199; the sequence is YEEPFTAEIYRQKASGSHKRS. 180–181 contributes to the S-adenosyl-L-methionine binding site; that stretch reads EE.

It belongs to the class VI-like SAM-binding methyltransferase superfamily. PEMT/PEM2 methyltransferase family. Isoform 2 is N-glycosylated with high-mannose oligosaccharides. In terms of tissue distribution, primarily expressed in liver (at protein level).

It is found in the endoplasmic reticulum. It localises to the endoplasmic reticulum membrane. The protein resides in the mitochondrion membrane. It catalyses the reaction a 1,2-diacyl-sn-glycero-3-phospho-N-methylethanolamine + S-adenosyl-L-methionine = a 1,2-diacyl-sn-glycero-3-phospho-N,N-dimethylethanolamine + S-adenosyl-L-homocysteine + H(+). It carries out the reaction a 1,2-diacyl-sn-glycero-3-phospho-N,N-dimethylethanolamine + S-adenosyl-L-methionine = a 1,2-diacyl-sn-glycero-3-phosphocholine + S-adenosyl-L-homocysteine + H(+). The catalysed reaction is a 1,2-diacyl-sn-glycero-3-phosphoethanolamine + S-adenosyl-L-methionine = a 1,2-diacyl-sn-glycero-3-phospho-N-methylethanolamine + S-adenosyl-L-homocysteine + H(+). The enzyme catalyses 1,2-di-(9Z-octadecenoyl)-sn-glycero-3-phosphoethanolamine + S-adenosyl-L-methionine = 1,2-di-(9Z-octadecenoyl)-sn-glycero-3-phospho-N-methylethanolamine + S-adenosyl-L-homocysteine + H(+). It catalyses the reaction 1,2-di-(9Z-octadecenoyl)-sn-glycero-3-phospho-N-methylethanolamine + S-adenosyl-L-methionine = 1,2-di-(9Z-octadecenoyl)-sn-glycero-3-phospho-N,N-dimethylethanolamine + S-adenosyl-L-homocysteine + H(+). It carries out the reaction 1,2-di-(9Z-octadecenoyl)-sn-glycero-3-phospho-N,N-dimethylethanolamine + S-adenosyl-L-methionine = 1,2-di-(9Z-octadecenoyl)-sn-glycero-3-phosphocholine + S-adenosyl-L-homocysteine + H(+). The catalysed reaction is 1,2-di-(9Z,12Z-octadecadienoyl)-sn-glycero-3-phosphoethanolamine + S-adenosyl-L-methionine = 1,2-di-(9Z,12Z-octadecadienoyl)-sn-glycero-3-phospho-N-methylethanolamine + S-adenosyl-L-homocysteine + H(+). The enzyme catalyses 1,2-di-(9Z,12Z-octadecadienoyl)-sn-glycero-3-phospho-N-methylethanolamine + S-adenosyl-L-methionine = 1,2-di-(9Z,12Z-octadecadienoyl)-sn-glycero-3-phospho-N,N-dimethylethanolamine + S-adenosyl-L-homocysteine + H(+). It catalyses the reaction 1,2-di-(9Z,12Z-octadecadienoyl)-sn-glycero-3-phospho-N,N-dimethylethanolamine + S-adenosyl-L-methionine = 1,2-di-(9Z,12Z-octadecadienoyl)-sn-glycero-3-phosphocholine + S-adenosyl-L-homocysteine + H(+). It carries out the reaction 1,2-di-(9Z,12Z,15Z-octadecatrienoyl)-sn-glycero-3-phosphoethanolamine + S-adenosyl-L-methionine = 1,2-di-(9Z,12Z,15Z-octadecatrienoyl)-sn-glycero-3-phospho-N-methylethanolamine + S-adenosyl-L-homocysteine + H(+). The catalysed reaction is 1,2-di-(9Z,12Z,15Z-octadecatrienoyl)-sn-glycero-3-phospho-N-methylethanolamine + S-adenosyl-L-methionine = 1,2-di-(9Z,12Z,15Z-octadecatrienoyl)-sn-glycero-3-phospho-N,N-dimethylethanolamine + S-adenosyl-L-homocysteine + H(+). The enzyme catalyses 1,2-di-(9Z,12Z,15Z-octadecatrienoyl)-sn-glycero-3-phospho-N,N-dimethylethanolamine + S-adenosyl-L-methionine = 1,2-di-(9Z,12Z,15Z-octadecatrienoyl)-sn-glycero-3-phosphocholine + S-adenosyl-L-homocysteine + H(+). It catalyses the reaction 1-hexadecanoyl-2-(4Z,7Z,10Z,13Z,16Z,19Z-docosahexaenoyl)-sn-glycero-3-phosphoethanolamine + S-adenosyl-L-methionine = 1-hexadecanoyl-2-(4Z,7Z,10Z,13Z,16Z,19Z-docosahexaenoyl)-sn-glycero-3-phospho-N-methylethanolamine + S-adenosyl-L-homocysteine + H(+). It carries out the reaction 1-hexadecanoyl-2-(4Z,7Z,10Z,13Z,16Z,19Z-docosahexaenoyl)-sn-glycero-3-phospho-N-methylethanolamine + S-adenosyl-L-methionine = 1-hexadecanoyl-2-(4Z,7Z,10Z,13Z,16Z,19Z-docosahexaenoyl)-sn-glycero-3-phospho-N,N-dimethylethanolamine + S-adenosyl-L-homocysteine + H(+). The catalysed reaction is 1-hexadecanoyl-2-(4Z,7Z,10Z,13Z,16Z,19Z-docosahexaenoyl)-sn-glycero-3-phospho-N,N-dimethylethanolamine + S-adenosyl-L-methionine = 1-hexadecanoyl-2-(4Z,7Z,10Z,13Z,16Z,19Z-docosahexaenoyl)-sn-glycero-3-phosphocholine + S-adenosyl-L-homocysteine + H(+). It functions in the pathway phospholipid metabolism; phosphatidylcholine biosynthesis. With respect to regulation, the first methylation is rate-limiting. Catalyzes the three sequential steps of the methylation pathway for the biosynthesis of phosphatidylcholine, a critical and essential component for membrane structure. Uses S-adenosylmethionine (S-adenosyl-L-methionine, SAM or AdoMet) as the methyl group donor for the methylation of phosphatidylethanolamine (1,2-diacyl-sn-glycero-3-phosphoethanolamine, PE) to phosphatidylmonomethylethanolamine (1,2-diacyl-sn-glycero-3-phospho-N-methylethanolamine, PMME), PMME to phosphatidyldimethylethanolamine (1,2-diacyl-sn-glycero-3-phospho-N,N-dimethylethanolamine, PDME), and PDME to phosphatidylcholine (1,2-diacyl-sn-glycero-3-phosphocholine, PC), producing S-adenosyl-L-homocysteine in each step. Responsible for approximately 30% of hepatic PC with the CDP-choline pathway accounting for the other 70%. Functionally, catalyzes the three sequential steps of the methylation of 1,2-diacyl-sn-glycero-3-phospho-N-methylethanolamine (PMME) to 1,2-diacyl-sn-glycero-3-phospho-N,N-dimethylethanolamine (PDME) more efficiently than isoform 2. Induces increase in PC species with longer polyunsaturated chains than isoform 2. Its function is as follows. Produces a higher increase in the level of PC species containing long chains with three double bonds than isoform 1. The polypeptide is Phosphatidylethanolamine N-methyltransferase (Homo sapiens (Human)).